We begin with the raw amino-acid sequence, 596 residues long: MAEPSGAETRPQIRVTVKTPKDKEEIVICDQASVKEFKEEISRRFKAQQDQLVLIFAGKILKDGDTLSQHGIKDGLTVHLVIKTPQKAQDPVTAAASPPSTPDSASAPSTTPASPAAAPVQPCSSGNTTSDAGSGGGPSPVAAEGPSSATASILSGFGGILGLGSLGLGSANFMELQQQMQRQLMSNPEMLSQIMENPLVQDMMSNPDLMRHMIMANPQMQQLMERNPEISHMLNNPELMRQTMELARNPAMMQEMMRNQDRALSNLESVPGGYNALRRMYTDIQEPMFTAAREQFGNNPFSSLAGNSDNSSSQPLRTENREPLPNPWSPSPPTSQAPGSGGEGTGGSGTSQVHPTVSNPFGINAASLGSGMFNSPEMQALLQQISENPQLMQNVISAPYMRTMMQTLAQNPDFAAQMMVNVPLFAGNPQLQEQLRLQLPVFLQQMQNPESLSILTNPRAMQALLQIQQGLQTLQTEAPGLVPSLGSFGTPRTSVPLAGSNSGSSAEAPTSSPGVPATSPPSAGSNAQQQLMQQMIQLLSGSGNSQVPMPEVRFQQQLEQLNSMGFINREANLQALIATGGDINAAIERLLGSQLS.

The Ubiquitin-like domain maps to Ile-13–Lys-87. Residues Lys-23 and Lys-62 each participate in a glycyl lysine isopeptide (Lys-Gly) (interchain with G-Cter in SUMO2) cross-link. The interval Gln-89 to Ser-148 is disordered. Composition is skewed to low complexity over residues Thr-93–Pro-119 and Ser-139–Ser-148. Position 139 is a phosphoserine (Ser-139). 2 STI1 domains span residues Asn-187–Met-224 and Glu-225–Met-256. Thr-282 carries the phosphothreonine modification. The interval Gly-297–Phe-361 is disordered. The span at Ser-302–Ser-313 shows a compositional bias: low complexity. Ser-313 carries the post-translational modification Phosphoserine. A compositionally biased stretch (pro residues) spans Leu-324–Ser-335. Residues Gly-339 to Gly-349 are compositionally biased toward gly residues. Polar residues predominate over residues Gln-352–Phe-361. 2 STI1 domains span residues Asn-388–Leu-435 and Leu-439–Leu-471. Residues Val-482–Gln-528 form a disordered region. Residues Gly-499–Pro-513 are compositionally biased toward polar residues. A UBA domain is found at Pro-548–Ser-593.

In terms of assembly, homooligomer. Binds signal sequences of proteins that are targeted to the endoplasmic reticulum. Interacts (via UBA domain) with GJA1 (not ubiquitinated) and with ubiquitin; both compete for the same binding site. Interacts (via UBA domain) with ubiquitin and with polyubiquitin chains. Interacts (via ubiquitin-like domain) with PSMD2 and PSMD4, regulatory subunits of the 26S proteasome. Interacts with ATXN1/SCA1; interaction with ATXN1 inhibits polyubiquitination of UBQLN4 and interferes with PSMD4 binding. Interacts with HERPUD1. Interacts (via ubiquitin-like domain) with UBQLN1 (via UBA domain). Interacts with UBQLN2. Interacts (via STI1 1 and 2 domains) with MAP1LC3A/B/C. Interacts with BAG6. Interacts with MRE11 (when ubiquitinated); interaction with ubiquitinated MRE11 leads to MRE11 removal from chromatin. Interacts with DESI1/POST; leading to nuclear export. Interacts with BCL2A1 and BCL2L10. Post-translationally, phosphorylated by ATM at Ser-313 in response to DNA damage, leading to localization in the nucleus and recruitment to sites of DNA damage. In terms of processing, ubiquitinated; this does not lead to proteasomal degradation. May undergo both 'Lys-48'- and 'Lys-63'-linked polyubiquitination. As to expression, detected in testis, ovary, thyroid, kidney, thymus, heart, liver, lung and spleen (at protein level). Highly expressed in heart, skeletal muscle, kidney, liver and brain. Detected at lower levels in testis, lung and spleen.

The protein resides in the nucleus. It is found in the cytoplasm. Its subcellular location is the chromosome. The protein localises to the endoplasmic reticulum. It localises to the perinuclear region. The protein resides in the cytoplasmic vesicle. It is found in the autophagosome. In terms of biological role, regulator of protein degradation that mediates the proteasomal targeting of misfolded, mislocalized or accumulated proteins. Acts by binding polyubiquitin chains of target proteins via its UBA domain and by interacting with subunits of the proteasome via its ubiquitin-like domain. Key regulator of DNA repair that represses homologous recombination repair: in response to DNA damage, recruited to sites of DNA damage following phosphorylation by ATM and acts by binding and removing ubiquitinated MRE11 from damaged chromatin, leading to MRE11 degradation by the proteasome. MRE11 degradation prevents homologous recombination repair, redirecting double-strand break repair toward non-homologous end joining (NHEJ). Specifically recognizes and binds mislocalized transmembrane-containing proteins and targets them to proteasomal degradation. Collaborates with DESI1/POST in the export of ubiquitinated proteins from the nucleus to the cytoplasm. Plays a role in the regulation of the proteasomal degradation of non-ubiquitinated GJA1. Acts as an adapter protein that recruits UBQLN1 to the autophagy machinery. Mediates the association of UBQLN1 with autophagosomes and the autophagy-related protein LC3 (MAP1LC3A/B/C) and may assist in the maturation of autophagosomes to autolysosomes by mediating autophagosome-lysosome fusion. This chain is Ubiquilin-4, found in Mus musculus (Mouse).